The following is a 927-amino-acid chain: E3 ubiquitin-protein ligase HOS1 (927 aa).

The RING-type; degenerate zinc-finger motif lies at 53–93 (CRATRDLASCGRFVNYVLNPCGHASLCTECCQRCDVCPICR). 3 disordered regions span residues 678 to 699 (SGQFSEMEDASEGAKKSDLPDA), 782 to 806 (FKDLNRARGNSQLQGKRTEESSPEV), and 832 to 927 (VKSS…FAAR). Basic and acidic residues predominate over residues 797–806 (KRTEESSPEV). Composition is skewed to polar residues over residues 832-851 (VKSSSNHLNGSSQKPESTFF) and 878-892 (NNNNVLATESRNNSG). Residues 917 to 927 (KGRRRRRFAAR) show a composition bias toward basic residues.

In terms of assembly, interacts with SCRM/ICE1, FLK and MSI4/FVE. Ubiquitously expressed with higher levels in leaf vasculature, roots and root tips.

The protein localises to the nucleus. The protein resides in the cytoplasm. The enzyme catalyses S-ubiquitinyl-[E2 ubiquitin-conjugating enzyme]-L-cysteine + [acceptor protein]-L-lysine = [E2 ubiquitin-conjugating enzyme]-L-cysteine + N(6)-ubiquitinyl-[acceptor protein]-L-lysine.. It functions in the pathway protein modification; protein ubiquitination. In terms of biological role, E3 ubiquitin-protein ligase that mediates ubiquitination and subsequent proteasomal degradation of the transcription factor ICE1. Acts as a negative regulator of cold signaling pathways. Probably involved in recruiting the NUP107-160 subcomplex of the nuclear pore complex to chromatin. Controls flowering time in response to ambient temperatures (16 and 23 degrees Celsius) and intermittent cold, probably via the regulation of FT and TSF levels. This chain is E3 ubiquitin-protein ligase HOS1 (HOS1), found in Arabidopsis thaliana (Mouse-ear cress).